The chain runs to 330 residues: Urokinase plasminogen activator surface receptor (330 aa).

The first 20 residues, 1–20, serve as a signal peptide directing secretion; the sequence is MGQPLLLLLLVYTYIPGSWG. 3 UPAR/Ly6 domains span residues 21–112, 113–208, and 209–300; these read LRCL…RNRY, LECA…PPNG, and LQCY…PGKG. Disulfide bonds link Cys23-Cys44, Cys26-Cys32, and Cys37-Cys65. The N-linked (GlcNAc...) asparagine glycan is linked to Asn28. The N-linked (GlcNAc...) asparagine glycan is linked to Asn72. Intrachain disulfides connect Cys91–Cys96, Cys115–Cys142, Cys118–Cys125, Cys135–Cys164, Cys170–Cys187, Cys188–Cys193, Cys211–Cys239, Cys214–Cys222, Cys232–Cys258, Cys264–Cys282, and Cys283–Cys288. N-linked (GlcNAc...) asparagine glycans are attached at residues Asn179 and Asn189. Asn279 carries N-linked (GlcNAc...) asparagine glycosylation. Gly300 carries the GPI-anchor amidated glycine lipid modification. The propeptide at 301–330 is removed in mature form; that stretch reads GAPKTSPAHLSFFVSLLLTARLWGATLLCT.

As to quaternary structure, monomer. Interacts (via the UPAR/Ly6 domains) with SRPX2. Interacts with MRC2. Interacts with SORL1 (via N-terminal ectodomain); this interaction decreases PLAUR internalization. The ternary complex composed of PLAUR-PLAU-SERPINE1 also interacts with SORL1. Interacts with CD82; this interaction prevents PLAUR from binding to its high affinity ligand PLAU.

Its subcellular location is the cell membrane. Its function is as follows. Acts as a receptor for urokinase plasminogen activator. Plays a role in localizing and promoting plasmin formation. Mediates the proteolysis-independent signal transduction activation effects of U-PA. This chain is Urokinase plasminogen activator surface receptor (PLAUR), found in Bos taurus (Bovine).